Here is a 216-residue protein sequence, read N- to C-terminus: Ras-related protein RABE1c (216 aa).

22 to 29 (GDSGVGKS) provides a ligand contact to GTP. Residues 44–52 (FITTIGIDF) carry the Effector region motif. GTP is bound by residues 70-74 (DTAGQ), 128-131 (NKAD), and 159-160 (SA). S-geranylgeranyl cysteine attachment occurs at residues Cys213 and Cys214.

This sequence belongs to the small GTPase superfamily. Rab family. Interacts with PI5K2.

Its subcellular location is the golgi apparatus membrane. It localises to the cell membrane. Functionally, involved in membrane trafficking from the Golgi to the plasma membrane. In Arabidopsis thaliana (Mouse-ear cress), this protein is Ras-related protein RABE1c (RABE1C).